An 84-amino-acid polypeptide reads, in one-letter code: Cytochrome b559 subunit alpha (84 aa).

Residues 22–36 form a helical membrane-spanning segment; that stretch reads IIHSITIPSLFVSGW. H24 serves as a coordination point for heme.

This sequence belongs to the PsbE/PsbF family. In terms of assembly, heterodimer of an alpha subunit and a beta subunit. PSII is composed of 1 copy each of membrane proteins PsbA, PsbB, PsbC, PsbD, PsbE, PsbF, PsbH, PsbI, PsbJ, PsbK, PsbL, PsbM, PsbT, PsbX, PsbY, PsbZ, Psb30/Ycf12, at least 3 peripheral proteins of the oxygen-evolving complex and a large number of cofactors. It forms dimeric complexes. The cofactor is heme b.

The protein localises to the plastid. The protein resides in the chloroplast thylakoid membrane. In terms of biological role, this b-type cytochrome is tightly associated with the reaction center of photosystem II (PSII). PSII is a light-driven water:plastoquinone oxidoreductase that uses light energy to abstract electrons from H(2)O, generating O(2) and a proton gradient subsequently used for ATP formation. It consists of a core antenna complex that captures photons, and an electron transfer chain that converts photonic excitation into a charge separation. This Phaeodactylum tricornutum (strain CCAP 1055/1) protein is Cytochrome b559 subunit alpha.